A 4059-amino-acid polypeptide reads, in one-letter code: Fibrocystin (4059 aa).

An N-terminal signal peptide occupies residues 1–18 (MMLAWLVSLLSMEVLLLA). The Extracellular portion of the chain corresponds to 19 to 3851 (KPYSSFQFEP…LPVASKERST (3833 aa)). An IPT/TIG 1; atypical domain is found at 25–109 (QFEPAEGSLA…AGPYSLEMRS (85 aa)). Residues Asn-55 and Asn-224 are each glycosylated (N-linked (GlcNAc...) asparagine). 2 IPT/TIG domains span residues 135 to 230 (PVLY…FSVF) and 257 to 333 (PEIL…FEVG). A PA14 domain is found at 323–483 (AGNRGLRFEV…TWLNPDVVNT (161 aa)). N-linked (GlcNAc...) asparagine glycans are attached at residues Asn-355, Asn-385, Asn-518, Asn-527, Asn-620, Asn-639, Asn-709, Asn-867, Asn-965, Asn-975, Asn-1082, Asn-1114, Asn-1133, Asn-1239, Asn-1273, Asn-1308, Asn-1319, Asn-1344, Asn-1373, Asn-1456, Asn-1471, Asn-1528, Asn-1613, Asn-1627, Asn-1694, Asn-1760, Asn-1775, Asn-1875, Asn-1879, Asn-1915, Asn-1955, Asn-2030, and Asn-2139. 2 IPT/TIG domains span residues 945-997 (LVHF…FMLV) and 1017-1100 (PRLD…AFTY). An IPT/TIG 6; atypical domain is found at 1106 to 1190 (PVIVSLSRNR…IRSQGVDLYI (85 aa)). In terms of domain architecture, IPT/TIG 7 spans 1198-1266 (SVEPCSGSLL…RADVLTVLAS (69 aa)). The 82-residue stretch at 1297 to 1378 (PVVTAMWGEF…MGFANMSVVP (82 aa)) folds into the IPT/TIG 8; atypical domain. Positions 1385-1466 (PQIIAIFPTH…ITVLVNGLTS (82 aa)) constitute an IPT/TIG 9 domain. IPT/TIG domains lie at 1482–1566 (PIVD…RNFF) and 1569–1637 (PQVL…IDVN). The region spanning 1654–1738 (PELLSVSRSQ…VLRATVTSVT (85 aa)) is the IPT/TIG 12; atypical domain. Positions 1928-2049 (HSWFPQRVPH…PEVTVTYLQA (122 aa)) constitute a G8 1 domain. PbH1 repeat units lie at residues 2244-2266 (TWGL…LLGS) and 2287-2321 (EQGS…YTFS). An N-linked (GlcNAc...) asparagine glycan is attached at Asn-2380. PbH1 repeat units follow at residues 2404–2426 (SNNL…DILE) and 2459–2481 (RWEL…AIRT). Residues Asn-2466, Asn-2503, Asn-2529, Asn-2547, Asn-2581, Asn-2589, Asn-2627, Asn-2747, and Asn-2762 are each glycosylated (N-linked (GlcNAc...) asparagine). Residues 2741–2867 (KGWGGYNHTI…PKKSWVHLGA (127 aa)) form the G8 2 domain. PbH1 repeat units lie at residues 3004-3026 (SAGS…HASS) and 3027-3049 (SHGV…DVEG). An N-linked (GlcNAc...) asparagine glycan is attached at Asn-3051. The stretch at 3080 to 3102 (AEDIILHGNVVAGSERLGFHVGG) is one PbH1 7 repeat. Asn-3133 and Asn-3162 each carry an N-linked (GlcNAc...) asparagine glycan. A PbH1 8 repeat occupies 3188-3212 (TVQITLRNSVIVATSSSFDCIHDRK). 3 N-linked (GlcNAc...) asparagine glycosylation sites follow: Asn-3218, Asn-3719, and Asn-3831. A helical membrane pass occupies residues 3852 to 3872 (IILALSLCSVASWVALSCLVC). The segment at 3869–3886 (CLVCCWFKKSKTRKIKPE) is ciliary targeting sequence (CST). Topologically, residues 3873–4059 (CWFKKSKTRK…LHTAPPETIQ (187 aa)) are cytoplasmic. Basic and acidic residues predominate over residues 3885–3898 (PEDISESQAKEQKK). A disordered region spans residues 3885 to 3915 (PEDISESQAKEQKKNTHNSSKPRGLQAKTAK). The interval 3946 to 3970 (KRKVSRLAVTEERTTTPAPKIPRIT) is nuclear localization signal (NLS). The tract at residues 4015-4038 (QERKQGQEPSQLDKGSDCTGLSQE) is disordered.

Interacts with CAMLG. Interacts with PKD2. Interacts (via CST) with ARF4; this interaction allows an efficient PKHD1 trafficking to the cilium. Interacts (via CST) with RAB8A; this interaction controls trafficking through the endomembrane systeme and to the cilium. Interacts (via CST) with TULP3; this interaction allows PKHD1 trafficking to the cilium. Palmitoylated. Palmitoylation facilitates the trafficking to the cilia and membrane targeting. Post-translationally, N-glycosylated. In terms of processing, several proteolytic cleavages occur within the extracellular domain, whereas at least one cleavage occurs within the cytoplasmic domain. Cleaved by a probable proprotein convertase which produces an extracellular domain (polyductin extracellular domain, (PECD)) and a C-terminal fragment (polyductin transmembrane fragment (PTM)) which are tethered together by disulfide bonds. This extracellular domain (PECD) is then shed from the primary cilium by activation of a member of the ADAM metalloproteinase disintegrins family, resulting in concomitant release of an intra-cellular C-terminal fragment (ICD) via a gamma-secretase-dependent process. The proteolytic cleavage of the C-terminal intracellular fragment (ICD) is controlled by cytosolic calcium concentration and activation of PKC. Expressed in bile ducts and distal nephron segments but is absent from the proximal tubule. Expressed in pancreas and kidney but also in the liver. Expressed primarily in the distal tubule and thick ascending limb of the loop of Henle, and at low-level in the proximal tubule before renal development is complete at P0.

The protein localises to the cell membrane. It is found in the cytoplasm. It localises to the apical cell membrane. Its subcellular location is the cytoskeleton. The protein resides in the cilium basal body. The protein localises to the cell projection. It is found in the cilium. It localises to the spindle. Its subcellular location is the chromosome. The protein resides in the centromere. The protein localises to the nucleus. It is found in the secreted. It localises to the extracellular exosome. Its subcellular location is the endoplasmic reticulum. The protein resides in the golgi apparatus. In terms of biological role, promotes ciliogenesis in renal epithelial cells and therefore participates in the tubules formation and/or ensures the maintenance of the architecture of the lumen of the kidney. Has an impact on cellular symmetry by ensuring correct bipolar cell division through the regulation of centrosome duplication and mitotic spindle assembly and by maintaining oriented cell division (OCD) during tubular elongation through planar cell polarity (PCP) pathway. During epithelial cell morphogenesis, it also regulates cell-cell and cell-matrix adhesion and participates in cell motility. Promotes cell-cell contact through the positive regulation of PTK2 kinase activity leading to either positive regulation of epithelial cell proliferation through the HRAS/RAF1 pathways, or negative regulation of apoptosis through the PDK1/AKT1 pathway. May act in collecting-duct and biliary differentiation. May participate in the regulation of the cholangiocytes proliferation and the CCN2 production in an CXCL8-dependent manner. In Mus musculus (Mouse), this protein is Fibrocystin.